Here is a 529-residue protein sequence, read N- to C-terminus: Putative inorganic phosphate cotransporter (529 aa).

Transmembrane regions (helical) follow at residues 37–57 (FATRYFVTFMLFLGMANAYVM), 110–130 (YILSSFFYGYVITQIPFGILA), 148–168 (VFAFLVPVAARGGGVWGLCAV), 202–222 (AVYAGAQFGTIISMPLSGLLA), 232–252 (SIFYVFGIVGTVWSIAFLIFV), 338–358 (LPYLAMWLFSMFISVVADWMI), 429–449 (FLMSITNCSANLAGLLAPIAA), and 466–486 (IVFFIAAFVYIICGTFYNIFG). Residues 495-529 (NPEDDEQKPALQTTVTTSPARLSNGSTAPAAISSS) are disordered. Residues 504–529 (ALQTTVTTSPARLSNGSTAPAAISSS) show a composition bias toward polar residues.

The protein belongs to the major facilitator superfamily. Sodium/anion cotransporter family.

The protein localises to the membrane. Functionally, may be an inorganic phosphate cotransporter. This is Putative inorganic phosphate cotransporter (Picot) from Drosophila melanogaster (Fruit fly).